A 435-amino-acid chain; its full sequence is 3-phosphoshikimate 1-carboxyvinyltransferase (435 aa).

Positions 15, 16, and 20 each coordinate 3-phosphoshikimate. Residue lysine 15 coordinates phosphoenolpyruvate. Phosphoenolpyruvate is bound by residues glycine 96 and arginine 124. 3-phosphoshikimate-binding residues include serine 169, glutamine 171, serine 195, aspartate 318, and lysine 345. Phosphoenolpyruvate is bound at residue glutamine 171. Residue aspartate 318 is the Proton acceptor of the active site. Phosphoenolpyruvate is bound by residues arginine 349 and arginine 393.

The protein belongs to the EPSP synthase family. Monomer.

The protein localises to the cytoplasm. The catalysed reaction is 3-phosphoshikimate + phosphoenolpyruvate = 5-O-(1-carboxyvinyl)-3-phosphoshikimate + phosphate. It participates in metabolic intermediate biosynthesis; chorismate biosynthesis; chorismate from D-erythrose 4-phosphate and phosphoenolpyruvate: step 6/7. Functionally, catalyzes the transfer of the enolpyruvyl moiety of phosphoenolpyruvate (PEP) to the 5-hydroxyl of shikimate-3-phosphate (S3P) to produce enolpyruvyl shikimate-3-phosphate and inorganic phosphate. This is 3-phosphoshikimate 1-carboxyvinyltransferase from Chlorobium chlorochromatii (strain CaD3).